The following is a 158-amino-acid chain: Phospholipase A2 AP-PLA2-II (158 aa).

Positions methionine 1–alanine 16 are cleaved as a signal peptide. Residues glutamine 17–threonine 23 constitute a propeptide that is removed on maturation. Cystine bridges form between cysteine 51-cysteine 158, cysteine 53-cysteine 69, cysteine 68-cysteine 138, cysteine 75-cysteine 131, cysteine 85-cysteine 124, and cysteine 109-cysteine 129. The Ca(2+) site is built by glycine 54 and glycine 56. Histidine 72 is an active-site residue. Aspartate 73 contributes to the Ca(2+) binding site. Aspartate 132 is a catalytic residue.

Belongs to the phospholipase A2 family. Group I subfamily. In terms of assembly, monomer. Ca(2+) is required as a cofactor. As to expression, expressed by the venom gland.

The protein resides in the secreted. It carries out the reaction a 1,2-diacyl-sn-glycero-3-phosphocholine + H2O = a 1-acyl-sn-glycero-3-phosphocholine + a fatty acid + H(+). Its function is as follows. Starfish phospholipase A2 (PLA2) that has hemorrhagic and capillary permeability-increasing activities and hence is considered to be deeply involved in the local inflammation. Shows hemolytic activity only in the presence of phosphatidylcholine (PC). PLA2 catalyzes the calcium-dependent hydrolysis of the 2-acyl groups in 3-sn-phosphoglycerides. In Acanthaster planci (Crown-of-thorns starfish), this protein is Phospholipase A2 AP-PLA2-II.